We begin with the raw amino-acid sequence, 157 residues long: dCTP deaminase (157 aa).

Residues 79–84, aspartate 95, glutamine 124, and tyrosine 138 contribute to the dCTP site; that span reads RSSLAR.

Belongs to the dCTP deaminase family. Homotrimer.

It catalyses the reaction dCTP + H2O + H(+) = dUTP + NH4(+). It functions in the pathway pyrimidine metabolism; dUMP biosynthesis; dUMP from dCTP (dUTP route): step 1/2. In terms of biological role, catalyzes the deamination of dCTP to dUTP. In Thermococcus gammatolerans (strain DSM 15229 / JCM 11827 / EJ3), this protein is dCTP deaminase.